Here is a 369-residue protein sequence, read N- to C-terminus: 4-hydroxy-3-methylbut-2-en-1-yl diphosphate synthase (flavodoxin) (369 aa).

[4Fe-4S] cluster-binding residues include cysteine 270, cysteine 273, cysteine 305, and glutamate 312.

This sequence belongs to the IspG family. Requires [4Fe-4S] cluster as cofactor.

The catalysed reaction is (2E)-4-hydroxy-3-methylbut-2-enyl diphosphate + oxidized [flavodoxin] + H2O + 2 H(+) = 2-C-methyl-D-erythritol 2,4-cyclic diphosphate + reduced [flavodoxin]. It participates in isoprenoid biosynthesis; isopentenyl diphosphate biosynthesis via DXP pathway; isopentenyl diphosphate from 1-deoxy-D-xylulose 5-phosphate: step 5/6. Converts 2C-methyl-D-erythritol 2,4-cyclodiphosphate (ME-2,4cPP) into 1-hydroxy-2-methyl-2-(E)-butenyl 4-diphosphate. This Psychromonas ingrahamii (strain DSM 17664 / CCUG 51855 / 37) protein is 4-hydroxy-3-methylbut-2-en-1-yl diphosphate synthase (flavodoxin).